The following is a 53-amino-acid chain: MAKETREIIYLFSSTGNGHFYTTTKNKRSHPEKIKLKKFDPIIKKHITYTEKK.

It belongs to the bacterial ribosomal protein bL33 family.

The protein is Large ribosomal subunit protein bL33 of Blochmanniella floridana.